The primary structure comprises 111 residues: Mitochondrial import inner membrane translocase subunit TIM14 (111 aa).

The Mitochondrial intermembrane segment spans residues 1–3 (MTG). Residues 4-24 (GLIAAGLGLAAVGFGARYVLR) form a helical membrane-spanning segment. The Mitochondrial matrix segment spans residues 25–111 (NQALIKKGME…AKDLMESTKS (87 aa)). One can recognise a J domain in the interval 58-111 (EAAKILGITPSAKPAKIKDAHKKVMIVNHPDRGGSPYLAAKINEAKDLMESTKS).

This sequence belongs to the TIM14 family. As to quaternary structure, probable component of the PAM complex at least composed of a mitochondrial HSP70 protein, GrpE, tim-44, tim-16 and tim-14.

The protein resides in the mitochondrion inner membrane. Probable component of the PAM complex, a complex required for the translocation of transit peptide-containing proteins from the inner membrane into the mitochondrial matrix in an ATP-dependent manner. May act as a co-chaperone that stimulate the ATP-dependent activity. The chain is Mitochondrial import inner membrane translocase subunit TIM14 (dnj-21) from Caenorhabditis briggsae.